The following is a 195-amino-acid chain: 3-isopropylmalate dehydratase small subunit (195 aa).

It belongs to the LeuD family. LeuD type 1 subfamily. As to quaternary structure, heterodimer of LeuC and LeuD.

The catalysed reaction is (2R,3S)-3-isopropylmalate = (2S)-2-isopropylmalate. The protein operates within amino-acid biosynthesis; L-leucine biosynthesis; L-leucine from 3-methyl-2-oxobutanoate: step 2/4. In terms of biological role, catalyzes the isomerization between 2-isopropylmalate and 3-isopropylmalate, via the formation of 2-isopropylmaleate. This is 3-isopropylmalate dehydratase small subunit from Corynebacterium kroppenstedtii (strain DSM 44385 / JCM 11950 / CIP 105744 / CCUG 35717).